The chain runs to 278 residues: Small ribosomal subunit protein uS9m (278 aa).

The N-terminal 10 residues, 1-10 (MFSRLSLFRR), are a transit peptide targeting the mitochondrion. The disordered stretch occupies residues 259-278 (VERKKPGKKKARKMPTWVKR).

It belongs to the universal ribosomal protein uS9 family. Component of the mitochondrial small ribosomal subunit (mt-SSU). Mature yeast 74S mitochondrial ribosomes consist of a small (37S) and a large (54S) subunit. The 37S small subunit contains a 15S ribosomal RNA (15S mt-rRNA) and 34 different proteins. The 54S large subunit contains a 21S rRNA (21S mt-rRNA) and 46 different proteins.

Its subcellular location is the mitochondrion. Component of the mitochondrial ribosome (mitoribosome), a dedicated translation machinery responsible for the synthesis of mitochondrial genome-encoded proteins, including at least some of the essential transmembrane subunits of the mitochondrial respiratory chain. The mitoribosomes are attached to the mitochondrial inner membrane and translation products are cotranslationally integrated into the membrane. This is Small ribosomal subunit protein uS9m (MRPS9) from Saccharomyces cerevisiae (strain ATCC 204508 / S288c) (Baker's yeast).